We begin with the raw amino-acid sequence, 454 residues long: Serine/threonine-protein phosphatase C23G10.1 (454 aa).

Mn(2+) is bound by residues D196, H198, D224, and N256. The Proton donor role is filled by H257. H308 and H382 together coordinate Mn(2+).

It belongs to the PPP phosphatase family. PP-1 subfamily. Requires Mn(2+) as cofactor.

It carries out the reaction O-phospho-L-seryl-[protein] + H2O = L-seryl-[protein] + phosphate. It catalyses the reaction O-phospho-L-threonyl-[protein] + H2O = L-threonyl-[protein] + phosphate. In Caenorhabditis elegans, this protein is Serine/threonine-protein phosphatase C23G10.1.